The sequence spans 28 residues: Ranatuerin-2B (28 aa).

Cys23 and Cys28 are oxidised to a cystine.

In terms of tissue distribution, expressed by the skin glands.

It localises to the secreted. Functionally, antibacterial activity against Gram-positive bacterium S.aureus and Gram-negative bacterium E.coli. Has activity against C.albicans. The sequence is that of Ranatuerin-2B from Lithobates berlandieri (Rio Grande leopard frog).